A 539-amino-acid polypeptide reads, in one-letter code: E3 ubiquitin-protein ligase arc-1 (539 aa).

An RING-type zinc finger spans residues 6–53 (CNVCNEEYSARDPLKCPRVLTGCGHTICHNCAISIAGRNSSIFCPFDR). The segment at 103-149 (LLNLECDEDSEHVAVIYCTVCDSNLCERCSESTHSTNVLSKHRRIPL) adopts a B box-type zinc-finger fold. The ARF-like stretch occupies residues 369–539 (ESRVVLLGLD…LSRLNGTCPV (171 aa)). GTP is bound by residues 376 to 383 (GLDGAGKT), 422 to 426 (DVGGL), and 481 to 484 (NRKD).

It in the C-terminal section; belongs to the small GTPase superfamily. Arf family.

It catalyses the reaction S-ubiquitinyl-[E2 ubiquitin-conjugating enzyme]-L-cysteine + [acceptor protein]-L-lysine = [E2 ubiquitin-conjugating enzyme]-L-cysteine + N(6)-ubiquitinyl-[acceptor protein]-L-lysine.. It participates in protein modification; protein ubiquitination. Its function is as follows. Acts as an E3 ubiquitin-protein ligase. The protein is E3 ubiquitin-protein ligase arc-1 (arc-1) of Caenorhabditis elegans.